We begin with the raw amino-acid sequence, 417 residues long: NADH-quinone oxidoreductase subunit D (417 aa).

It belongs to the complex I 49 kDa subunit family. In terms of assembly, NDH-1 is composed of 14 different subunits. Subunits NuoB, C, D, E, F, and G constitute the peripheral sector of the complex.

The protein resides in the cell inner membrane. The catalysed reaction is a quinone + NADH + 5 H(+)(in) = a quinol + NAD(+) + 4 H(+)(out). NDH-1 shuttles electrons from NADH, via FMN and iron-sulfur (Fe-S) centers, to quinones in the respiratory chain. The immediate electron acceptor for the enzyme in this species is believed to be ubiquinone. Couples the redox reaction to proton translocation (for every two electrons transferred, four hydrogen ions are translocated across the cytoplasmic membrane), and thus conserves the redox energy in a proton gradient. The sequence is that of NADH-quinone oxidoreductase subunit D from Burkholderia orbicola (strain MC0-3).